The sequence spans 68 residues: Toxin Cg2 (68 aa).

One can recognise an LCN-type CS-alpha/beta domain in the interval 1 to 66; it reads KDGYLVNKST…VYPIPGKTCS (66 aa). Intrachain disulfides connect Cys12–Cys65, Cys16–Cys41, Cys25–Cys46, and Cys29–Cys48.

It belongs to the long (4 C-C) scorpion toxin superfamily. Sodium channel inhibitor family. Expressed by the venom gland.

It localises to the secreted. Its function is as follows. Binds to sodium channels (Nav) and inhibits them. This chain is Toxin Cg2, found in Centruroides gracilis (Slenderbrown scorpion).